The chain runs to 119 residues: Large ribosomal subunit protein bL20 (119 aa).

It belongs to the bacterial ribosomal protein bL20 family.

Its function is as follows. Binds directly to 23S ribosomal RNA and is necessary for the in vitro assembly process of the 50S ribosomal subunit. It is not involved in the protein synthesizing functions of that subunit. The protein is Large ribosomal subunit protein bL20 of Gloeobacter violaceus (strain ATCC 29082 / PCC 7421).